Consider the following 191-residue polypeptide: Reticulon-like protein B15 (191 aa).

The region spanning 13 to 191 is the Reticulon domain; sequence VADLCLWKDK…SKIPRAPKVE (179 aa). 3 helical membrane passes run 23–43, 47–67, and 122–142; these read INSGITLVMATLFWFLLEFME, VPLLCSILLLLMLILFLWAKF, and VAIIYNIGSYISLLTILYICL.

The protein localises to the endoplasmic reticulum membrane. This chain is Reticulon-like protein B15 (RTNLB15), found in Arabidopsis thaliana (Mouse-ear cress).